An 857-amino-acid polypeptide reads, in one-letter code: Envelope glycoprotein B (857 aa).

Positions 1 to 21 (MTRRRVLSVVVLLAALACRLG) are cleaved as a signal peptide. Residues 22 to 732 (AQTPEQPAPP…SGFISFFKNP (711 aa)) are Virion surface-facing. 5 disulfide bridges follow: Cys51-Cys528, Cys68-Cys484, Cys141-Cys206, Cys295-Cys342, and Cys551-Cys588. Asn76 is a glycosylation site (N-linked (GlcNAc...) asparagine; by host). Residues 108–114 (IYNGWYA) form an involved in fusion and/or binding to host membrane region. An N-linked (GlcNAc...) asparagine; by host glycan is attached at Asn163. Residues 192–200 (GWLIWTYRT) are involved in fusion and/or binding to host membrane. N-linked (GlcNAc...) asparagine; by host glycosylation is found at Asn290, Asn329, Asn348, and Asn395. The tract at residues 398–453 (ELTTPTSSPPSSPSPPAPSAARGSTPAAVLRRRRRDAGNATTPVPPTAPGKSLGTL) is disordered. Pro residues predominate over residues 404-415 (SSPPSSPSPPAP). The span at 416–425 (SAARGSTPAA) shows a compositional bias: low complexity. Asn436, Asn563, and Asn629 each carry an N-linked (GlcNAc...) asparagine; by host glycan. The segment at 561 to 620 (FINDTKTYEGQLGTDNEIFLTKKMTEVCQATSQYYFQSGNEIHVYNDYHHFKTIELDGIA) is oligomerization. Hydrophobic membrane proximal region regions lie at residues 678 to 730 (LDNA…SFFK) and 709 to 729 (NLVS…ISFF). The chain crosses the membrane as a helical span at residues 733–753 (FGGMLILVLVAGVVILVISLT). Residues 754-857 (RRTRQMSQQP…ALLGEAETEF (104 aa)) lie on the Intravirion side of the membrane. The segment at 832 to 857 (FPGLRRRRYHDPETAAALLGEAETEF) is disordered. Residues 845–857 (TAAALLGEAETEF) show a composition bias toward low complexity.

This sequence belongs to the herpesviridae glycoprotein B family. Homotrimer; disulfide-linked. Binds to heparan sulfate proteoglycans. Interacts with gH/gL heterodimer. In terms of processing, a proteolytic cleavage by host furin generates two subunits that remain linked by disulfide bonds.

It localises to the virion membrane. It is found in the host cell membrane. The protein localises to the host endosome membrane. The protein resides in the host Golgi apparatus membrane. Functionally, envelope glycoprotein that forms spikes at the surface of virion envelope. Essential for the initial attachment to heparan sulfate moieties of the host cell surface proteoglycans. Involved in fusion of viral and cellular membranes leading to virus entry into the host cell. Following initial binding to its host receptors, membrane fusion is mediated by the fusion machinery composed at least of gB and the heterodimer gH/gL. May be involved in the fusion between the virion envelope and the outer nuclear membrane during virion egress. This chain is Envelope glycoprotein B, found in Epstein-Barr virus (strain B95-8) (HHV-4).